An 89-amino-acid chain; its full sequence is Small ribosomal subunit protein uS15 (89 aa).

It belongs to the universal ribosomal protein uS15 family. In terms of assembly, part of the 30S ribosomal subunit. Forms a bridge to the 50S subunit in the 70S ribosome, contacting the 23S rRNA.

Its function is as follows. One of the primary rRNA binding proteins, it binds directly to 16S rRNA where it helps nucleate assembly of the platform of the 30S subunit by binding and bridging several RNA helices of the 16S rRNA. Forms an intersubunit bridge (bridge B4) with the 23S rRNA of the 50S subunit in the ribosome. This Allorhizobium ampelinum (strain ATCC BAA-846 / DSM 112012 / S4) (Agrobacterium vitis (strain S4)) protein is Small ribosomal subunit protein uS15.